Consider the following 876-residue polypeptide: Paramyosin (876 aa).

Residues 1–28 (MSARSAKFMYRSGNAGASGDLSVEYGTD) form a nonhelical region region. The stretch at 29–855 (LGALTRLEDK…IRAKHRSWVT (827 aa)) forms a coiled coil. Residues 856–876 (TSQVPGGTRQVFVTQEEQSNY) are nonhelical region.

Belongs to the paramyosin family. Homodimer.

The protein resides in the cytoplasm. Its subcellular location is the myofibril. Its function is as follows. Paramyosin is a major structural component of many thick filaments isolated from invertebrate muscles. The polypeptide is Paramyosin (Sarcoptes scabiei (Itch mite)).